The sequence spans 422 residues: Enolase (422 aa).

Residue Gln-162 coordinates (2R)-2-phosphoglycerate. Residue Glu-204 is the Proton donor of the active site. Mg(2+)-binding residues include Asp-241, Glu-285, and Asp-312. (2R)-2-phosphoglycerate is bound by residues Lys-337, Arg-366, Ser-367, and Lys-388. Lys-337 serves as the catalytic Proton acceptor.

The protein belongs to the enolase family. Mg(2+) is required as a cofactor.

The protein resides in the cytoplasm. It is found in the secreted. It localises to the cell surface. The enzyme catalyses (2R)-2-phosphoglycerate = phosphoenolpyruvate + H2O. The protein operates within carbohydrate degradation; glycolysis; pyruvate from D-glyceraldehyde 3-phosphate: step 4/5. Functionally, catalyzes the reversible conversion of 2-phosphoglycerate (2-PG) into phosphoenolpyruvate (PEP). It is essential for the degradation of carbohydrates via glycolysis. The chain is Enolase from Streptococcus thermophilus.